Here is a 147-residue protein sequence, read N- to C-terminus: Large ribosomal subunit protein uL15 (147 aa).

The tract at residues methionine 1–threonine 58 is disordered. A compositionally biased stretch (gly residues) spans serine 42 to glycine 52.

This sequence belongs to the universal ribosomal protein uL15 family. Part of the 50S ribosomal subunit.

Functionally, binds to the 23S rRNA. The polypeptide is Large ribosomal subunit protein uL15 (Caldicellulosiruptor saccharolyticus (strain ATCC 43494 / DSM 8903 / Tp8T 6331)).